A 114-amino-acid polypeptide reads, in one-letter code: Protein ORF3 (114 aa).

Hydrophobic regions lie at residues 6–24 (WALG…CCSR) and 33–53 (AVVG…GLIL). Positions 28–68 (VSRLAAVVGGAAAVPAVVSGVTGLILSPSQSPIFIQPTPSP) are interaction with host HPX. An interaction with the capsid protein region spans residues 48-72 (VTGLILSPSQSPIFIQPTPSPRMSP). Serine 71 is subject to Phosphoserine; by host. A homodimerization, and interaction with host AMBP/bikunin region spans residues 72-114 (PLRPGLDLVFANPSDHSAPLGATRPSAPPLPHVVDLPQLGPRR). The tract at residues 85-114 (SDHSAPLGATRPSAPPLPHVVDLPQLGPRR) is disordered. Positions 95 to 104 (RPSAPPLPHV) are interaction with host SRC, HCK, FYN, PIK3R3 and GRB2. The short motif at 96–99 (PSAP) is the PTAP/PSAP motif element.

This sequence belongs to the hepevirus ORF3 protein family. As to quaternary structure, forms homooligomers. Interacts with host SRC, HCK, FYN, PIK3R3 and GRB2 (via SH3 domain); binding does not activate the kinases. Interacts with host AMBP/bikunin and AMBP/alpha-1-microglobulin peptides. Interacts with host HPX/hemopexin. Interacts (when phosphorylated) with capsid protein ORF2. Interacts with host TSG101; this interaction plays a role in viral release from the host cell. Interacts with host SIRPA; this interaction down-regulates the phosphorylation of host IRF3. Post-translationally, palmitoylated in the N-terminus.

The protein localises to the host endoplasmic reticulum membrane. It is found in the host cytoplasm. Its subcellular location is the host cytoskeleton. It localises to the virion. The protein resides in the host cell membrane. Small multifunctional phosphoprotein involved in virion morphogenesis, egress and counteracting host innate immunity. Plays critical roles in the final steps of viral release by interacting with host TSG101, a member of the vacuolar protein-sorting pathway and using other cellular host proteins involved in vesicle formation pathway. Also acts as a viroporin and forms ion conductive pores allowing viral particle release. Impairs the generation of type I interferon by down-regulating host TLR3 and TLR7 as well as their downstream signaling pathways. Down-regulates the phosphorylation of host IRF3 via the interaction with host SIRP-alpha, thereby inhibiting IFN-I expression. Interacts with host microtubules. This chain is Protein ORF3, found in Hepatitis E virus genotype 1 (isolate Human/India/Hyderabad) (HEV-1).